The chain runs to 72 residues: PAMP-induced secreted peptide 1 (72 aa).

The N-terminal stretch at 1–30 is a signal peptide; that stretch reads MRRVSWSTVLIVVVMVSLFFVEHVVVPAAA. 2 positions are modified to 4-hydroxyproline: Pro65 and Pro67.

Post-translationally, contains 4-hydroxyproline; hydroxylated on Pro-65 and Pro-67. In terms of tissue distribution, expressed in guard cells, hydathodes, leaf trichomes, and vascular tissues of leaves and roots.

The protein localises to the secreted. It is found in the extracellular space. It localises to the apoplast. Functionally, endogenous secreted peptide that acts as elicitor of immune response and positive regulator of defense response. Amplifies the immune response triggered by flg22, the active epitope of bacterial flagellin. Acts as a negative regulator of root growth. The chain is PAMP-induced secreted peptide 1 from Arabidopsis thaliana (Mouse-ear cress).